We begin with the raw amino-acid sequence, 703 residues long: Methionine--tRNA ligase (703 aa).

A 'HIGH' region motif is present at residues 15 to 25 (PYANGPVHLGH). Zn(2+)-binding residues include cysteine 147, cysteine 150, cysteine 160, and cysteine 163. The 'KMSKS' region motif lies at 345–349 (KFSKS). Lysine 348 contributes to the ATP binding site. Positions 602–703 (DFQKIDLRVA…GEGINGNSVS (102 aa)) constitute a tRNA-binding domain.

This sequence belongs to the class-I aminoacyl-tRNA synthetase family. MetG type 1 subfamily. In terms of assembly, homodimer. It depends on Zn(2+) as a cofactor.

Its subcellular location is the cytoplasm. It catalyses the reaction tRNA(Met) + L-methionine + ATP = L-methionyl-tRNA(Met) + AMP + diphosphate. Functionally, is required not only for elongation of protein synthesis but also for the initiation of all mRNA translation through initiator tRNA(fMet) aminoacylation. In Chlorobaculum tepidum (strain ATCC 49652 / DSM 12025 / NBRC 103806 / TLS) (Chlorobium tepidum), this protein is Methionine--tRNA ligase.